The sequence spans 132 residues: Small ribosomal subunit protein uS8 (132 aa).

It belongs to the universal ribosomal protein uS8 family. As to quaternary structure, part of the 30S ribosomal subunit. Contacts proteins S5 and S12.

In terms of biological role, one of the primary rRNA binding proteins, it binds directly to 16S rRNA central domain where it helps coordinate assembly of the platform of the 30S subunit. This Methylocella silvestris (strain DSM 15510 / CIP 108128 / LMG 27833 / NCIMB 13906 / BL2) protein is Small ribosomal subunit protein uS8.